Reading from the N-terminus, the 180-residue chain is Superoxide dismutase [Cu-Zn] (180 aa).

A signal peptide spans 1-19 (MFMNLLSQVSNAIFPQVEA). 3 residues coordinate Cu cation: His68, His70, and His85. Cysteines 79 and 171 form a disulfide. Residues His85, His93, His102, and Asp105 each contribute to the Zn(2+) site. His142 is a Cu cation binding site.

The protein belongs to the Cu-Zn superoxide dismutase family. Homodimer. It depends on Cu cation as a cofactor. Zn(2+) is required as a cofactor.

It is found in the cytoplasm. The catalysed reaction is 2 superoxide + 2 H(+) = H2O2 + O2. Functionally, destroys radicals which are normally produced within the cells and which are toxic to biological systems. Required for normal brood size. May be involved in regulating mpk-1 phosphorylation downstream of phosphatase ptp-2 during oocyte maturation. This is Superoxide dismutase [Cu-Zn] from Caenorhabditis briggsae.